The following is a 280-amino-acid chain: Beta-lactamase OXA-58 (280 aa).

An N-terminal signal peptide occupies residues 1 to 18 (MKLLKILSLVCLSISIGA). A lipid anchor (N-palmitoyl cysteine) is attached at cysteine 19. Cysteine 19 carries the S-diacylglycerol cysteine lipid modification. Serine 83 functions as the Acyl-ester intermediate in the catalytic mechanism. A beta-lactam-binding residues include serine 83, lysine 86, serine 130, serine 221, tryptophan 223, and arginine 263. Lysine 86 carries the post-translational modification N6-carboxylysine.

This sequence belongs to the class-D beta-lactamase family. Monomer. Dimer. Post-translationally, carboxylated on the epsilon-amino group of a lysine, with the resulting carbamate functional group serving as a general base. Probably N-carboxylated at Lys-86 at neutral pH in vivo and undergoes complete N-decarboxylation, at pH 4.1, in vitro. N-carboxylation at Lys-86 probably increases catalytic activity under physiological conditions.

Its subcellular location is the cell membrane. It catalyses the reaction a beta-lactam + H2O = a substituted beta-amino acid. Its activity is regulated as follows. Activated approximately 3-fold by the presence of 0.1M NaHCO3. Class D beta-lactamase which confers resistance to the beta-lactam antibiotics, including penicillins and oxacillin, and moderate resistance to carbapenems such as imipenem; in the DH10B strain of E.coli. Acts via hydrolysis of the beta-lactam ring. Has benzylpenicillin-, oxacillin-, cephalothin- and imipenem-hydrolyzing activities. The protein is Beta-lactamase OXA-58 of Acinetobacter baumannii.